Here is a 161-residue protein sequence, read N- to C-terminus: Transcriptional repressor NrdR (161 aa).

A zinc finger spans residues 3 to 34 (CPYCGARDARVIDSRELNGGESIRRRRECIAC). The ATP-cone domain occupies 49–139 (LMVVKRDGRR…VYRRFADLED (91 aa)).

This sequence belongs to the NrdR family. It depends on Zn(2+) as a cofactor.

In terms of biological role, negatively regulates transcription of bacterial ribonucleotide reductase nrd genes and operons by binding to NrdR-boxes. The polypeptide is Transcriptional repressor NrdR (Thermomicrobium roseum (strain ATCC 27502 / DSM 5159 / P-2)).